Consider the following 140-residue polypeptide: MITLIGTSLAKKGLVFIFYGGSSKCESCRFNRTCLNLEKGRKYIITNVKKVTHKCPLHKNGRVQTVEVEPATIRTAVETKKAYKGSTIIFRNPTCVCECENHDICYPEGLYNDDKCQIEEIGPELVCKNGRNLTEVILSH.

The protein belongs to the UPF0179 family.

The chain is UPF0179 protein Msp_0996 from Methanosphaera stadtmanae (strain ATCC 43021 / DSM 3091 / JCM 11832 / MCB-3).